The chain runs to 207 residues: Guanylate kinase (207 aa).

One can recognise a Guanylate kinase-like domain in the interval 3 to 181 (GQLFVICGPS…AVEMVVSIVR (179 aa)). Position 10-17 (10-17 (GPSGAGKT)) interacts with ATP.

The protein belongs to the guanylate kinase family.

It localises to the cytoplasm. The enzyme catalyses GMP + ATP = GDP + ADP. Essential for recycling GMP and indirectly, cGMP. The polypeptide is Guanylate kinase (gmk) (Thermotoga maritima (strain ATCC 43589 / DSM 3109 / JCM 10099 / NBRC 100826 / MSB8)).